Reading from the N-terminus, the 735-residue chain is Protein-associating with the carboxyl-terminal domain of ezrin (735 aa).

G2 is lipidated: N-myristoyl glycine. One can recognise a Protein kinase domain in the interval 2 to 245 (GSENSALKSY…LSTLLSHDFF (244 aa)). HEAT repeat units lie at residues 194–249 (FGAL…RNDF), 285–323 (LIAS…NAPG), 333–370 (LFQS…HFTQ), and 372–409 (QLKK…LLGP). A Phosphoserine modification is found at S439. Disordered regions lie at residues 505–545 (LSDV…ASIH) and 604–648 (VPLT…GLGL). Over residues 528–538 (WPDWSEPEEPE) the composition is skewed to acidic residues. The interaction with EZR stretch occupies residues 547–735 (WPREPCDVAE…EELAWEDNNW (189 aa)). Position 701 is a phosphoserine (S701).

This sequence belongs to the protein kinase superfamily. Interacts with EZR/VIL2 C-terminal domain. In terms of processing, may be myristoylated; myristoylation may target it to Golgi compartment.

It localises to the cytoplasm. The protein localises to the golgi apparatus. Its subcellular location is the cell projection. It is found in the lamellipodium. May play a role in regulating cell adhesion/migration complexes in migrating cells. The sequence is that of Protein-associating with the carboxyl-terminal domain of ezrin (Scyl3) from Mus musculus (Mouse).